Reading from the N-terminus, the 276-residue chain is Diaminopimelate epimerase (276 aa).

Residues N13, Q46, and N66 each coordinate substrate. C75 (proton donor) is an active-site residue. Residues G76 to N77, N159, N192, and E210 to R211 contribute to the substrate site. C219 (proton acceptor) is an active-site residue. G220 to T221 lines the substrate pocket.

The protein belongs to the diaminopimelate epimerase family. In terms of assembly, homodimer.

It localises to the cytoplasm. It carries out the reaction (2S,6S)-2,6-diaminopimelate = meso-2,6-diaminopimelate. The protein operates within amino-acid biosynthesis; L-lysine biosynthesis via DAP pathway; DL-2,6-diaminopimelate from LL-2,6-diaminopimelate: step 1/1. Catalyzes the stereoinversion of LL-2,6-diaminopimelate (L,L-DAP) to meso-diaminopimelate (meso-DAP), a precursor of L-lysine and an essential component of the bacterial peptidoglycan. The chain is Diaminopimelate epimerase from Pseudomonas aeruginosa (strain LESB58).